Reading from the N-terminus, the 240-residue chain is C-type lectin domain family 4 member A (240 aa).

The Cytoplasmic segment spans residues 1–48; sequence MASEITYAEVRIKNESNSSVTYSGSPAAPREKPTRHLSKPGSLLVPFT. The ITIM motif signature appears at 5-10; sequence ITYAEV. Residues 18–38 form a disordered region; that stretch reads SSVTYSGSPAAPREKPTRHLS. The helical; Signal-anchor for type II membrane protein transmembrane segment at 49 to 69 threads the bilayer; the sequence is SLMVLLLLLAITFLVAFIIYF. Residues 70-240 are Extracellular-facing; that stretch reads QKYSQFLEEK…SVCQMKKIQL (171 aa). 3 disulfides stabilise this stretch: C107–C118, C140–C233, and C208–C225. A C-type lectin domain is found at 129–235; the sequence is SKASWSESEK…SGKQQSVCQM (107 aa). Ca(2+) is bound by residues V149 and E155. A glycan (N-linked (GlcNAc...) asparagine) is linked at N190. Ca(2+) contacts are provided by E200, S202, and E206. Residues 200 to 202 and E206 contribute to the alpha-D-mannopyranose site; that span reads EPS. 211-213 contacts N-acetyl-D-glucosamine; sequence INH. Ca(2+)-binding residues include N221 and D222.

May interact with PTPN6 via its ITIM site. As to expression, expressed by myeloid cells (dendritic cells, macrophages, and neutrophils) and B-cells.

Its subcellular location is the cell membrane. Its function is as follows. C-type lectin receptor that binds carbohydrates mannose and fucose but also weakly interacts with N-acetylglucosamine (GlcNAc) in a Ca(2+)-dependent manner. Involved in regulating immune reactivity. Once triggered by antigen, it is internalized by clathrin-dependent endocytosis and delivers its antigenic cargo into the antigen presentation pathway resulting in cross-priming of CD8(+) T cells. This cross-presentation and cross-priming are enhanced by TLR7 and TLR8 agonists with increased expansion of the CD8(+) T cells, high production of IFNG and TNF with reduced levels of IL4, IL5 and IL13. In plasmacytoid dendritic cells, inhibits TLR9-mediated IFNA and TNF production. May be involved via its ITIM motif (immunoreceptor tyrosine-based inhibitory motifs) in the inhibition of B-cell-receptor-mediated calcium mobilization and protein tyrosine phosphorylation. The protein is C-type lectin domain family 4 member A (Clec4a) of Rattus norvegicus (Rat).